The primary structure comprises 314 residues: 4-hydroxy-3-methylbut-2-enyl diphosphate reductase (314 aa).

Cysteine 12 contributes to the [4Fe-4S] cluster binding site. Histidine 41 and histidine 74 together coordinate (2E)-4-hydroxy-3-methylbut-2-enyl diphosphate. Residues histidine 41 and histidine 74 each contribute to the dimethylallyl diphosphate site. Isopentenyl diphosphate contacts are provided by histidine 41 and histidine 74. Cysteine 96 provides a ligand contact to [4Fe-4S] cluster. Histidine 124 contributes to the (2E)-4-hydroxy-3-methylbut-2-enyl diphosphate binding site. Residue histidine 124 participates in dimethylallyl diphosphate binding. Position 124 (histidine 124) interacts with isopentenyl diphosphate. Glutamate 126 serves as the catalytic Proton donor. Residue threonine 167 participates in (2E)-4-hydroxy-3-methylbut-2-enyl diphosphate binding. A [4Fe-4S] cluster-binding site is contributed by cysteine 197. 4 residues coordinate (2E)-4-hydroxy-3-methylbut-2-enyl diphosphate: serine 225, serine 226, asparagine 227, and serine 269. The dimethylallyl diphosphate site is built by serine 225, serine 226, asparagine 227, and serine 269. Residues serine 225, serine 226, asparagine 227, and serine 269 each contribute to the isopentenyl diphosphate site.

Belongs to the IspH family. The cofactor is [4Fe-4S] cluster.

The catalysed reaction is isopentenyl diphosphate + 2 oxidized [2Fe-2S]-[ferredoxin] + H2O = (2E)-4-hydroxy-3-methylbut-2-enyl diphosphate + 2 reduced [2Fe-2S]-[ferredoxin] + 2 H(+). The enzyme catalyses dimethylallyl diphosphate + 2 oxidized [2Fe-2S]-[ferredoxin] + H2O = (2E)-4-hydroxy-3-methylbut-2-enyl diphosphate + 2 reduced [2Fe-2S]-[ferredoxin] + 2 H(+). It functions in the pathway isoprenoid biosynthesis; dimethylallyl diphosphate biosynthesis; dimethylallyl diphosphate from (2E)-4-hydroxy-3-methylbutenyl diphosphate: step 1/1. It participates in isoprenoid biosynthesis; isopentenyl diphosphate biosynthesis via DXP pathway; isopentenyl diphosphate from 1-deoxy-D-xylulose 5-phosphate: step 6/6. Functionally, catalyzes the conversion of 1-hydroxy-2-methyl-2-(E)-butenyl 4-diphosphate (HMBPP) into a mixture of isopentenyl diphosphate (IPP) and dimethylallyl diphosphate (DMAPP). Acts in the terminal step of the DOXP/MEP pathway for isoprenoid precursor biosynthesis. This Aliivibrio fischeri (strain MJ11) (Vibrio fischeri) protein is 4-hydroxy-3-methylbut-2-enyl diphosphate reductase.